A 268-amino-acid chain; its full sequence is Acidic leucine-rich nuclear phosphoprotein 32 family member E (268 aa).

The residue at position 1 (methionine 1) is an N-acetylmethionine. LRR repeat units lie at residues glutamate 18–asparagine 38, glutamate 43–asparagine 64, lysine 65–cysteine 87, and asparagine 89–glutamine 110. Lysine 68 is covalently cross-linked (Glycyl lysine isopeptide (Lys-Gly) (interchain with G-Cter in SUMO2)). The 39-residue stretch at cysteine 123–glutamate 161 folds into the LRRCT domain. 2 stretches are compositionally biased toward acidic residues: residues aspartate 149–valine 216 and isoleucine 226–glutamate 247. Residues aspartate 149–aspartate 268 are disordered. The segment at glutamate 215–aspartate 268 is ZID domain. Over residues glycine 248–alanine 259 the composition is skewed to basic and acidic residues.

It belongs to the ANP32 family. Interacts with the importin alpha KPNA1 and KPNA2. Component of a SWR1-like complex, composed of EP400, KAT5/TIP60, TRRAP, BRD8, RUVBL1, RUVBL2, ING3 and ANP32E; the complex does not contain SRCAP. Interacts with H2A.Z/H2AZ1. Post-translationally, phosphorylated. The phosphorylation is nuclear localization signal (NLS)-dependent. In terms of tissue distribution, expressed in peripheral blood leukocytes, colon, small intestine, prostate, thymus, spleen, skeletal muscle, liver and kidney.

It is found in the cytoplasm. Its subcellular location is the nucleus. Its function is as follows. Histone chaperone that specifically mediates the genome-wide removal of histone H2A.Z/H2AZ1 from the nucleosome: removes H2A.Z/H2AZ1 from its normal sites of deposition, especially from enhancer and insulator regions. Not involved in deposition of H2A.Z/H2AZ1 in the nucleosome. May stabilize the evicted H2A.Z/H2AZ1-H2B dimer, thus shifting the equilibrium towards dissociation and the off-chromatin state. Inhibits activity of protein phosphatase 2A (PP2A). Does not inhibit protein phosphatase 1. May play a role in cerebellar development and synaptogenesis. The protein is Acidic leucine-rich nuclear phosphoprotein 32 family member E (ANP32E) of Homo sapiens (Human).